Reading from the N-terminus, the 144-residue chain is Large ribosomal subunit protein uL13 (144 aa).

It belongs to the universal ribosomal protein uL13 family. As to quaternary structure, part of the 50S ribosomal subunit.

Functionally, this protein is one of the early assembly proteins of the 50S ribosomal subunit, although it is not seen to bind rRNA by itself. It is important during the early stages of 50S assembly. In Clostridium botulinum (strain Alaska E43 / Type E3), this protein is Large ribosomal subunit protein uL13.